We begin with the raw amino-acid sequence, 323 residues long: tRNA uridine(34) hydroxylase (323 aa).

The Rhodanese domain occupies 123–217 (SDPDVVVIDT…YLETIPEEES (95 aa)). The active-site Cysteine persulfide intermediate is C177.

Belongs to the TrhO family.

The catalysed reaction is uridine(34) in tRNA + AH2 + O2 = 5-hydroxyuridine(34) in tRNA + A + H2O. Functionally, catalyzes oxygen-dependent 5-hydroxyuridine (ho5U) modification at position 34 in tRNAs. The sequence is that of tRNA uridine(34) hydroxylase from Methylobacillus flagellatus (strain ATCC 51484 / DSM 6875 / VKM B-1610 / KT).